The chain runs to 37 residues: Large ribosomal subunit protein bL36 (37 aa).

The protein belongs to the bacterial ribosomal protein bL36 family.

This Mesomycoplasma hyopneumoniae (strain 7448) (Mycoplasma hyopneumoniae) protein is Large ribosomal subunit protein bL36.